Reading from the N-terminus, the 1241-residue chain is ATP-dependent helicase/nuclease subunit A (1241 aa).

The 474-residue stretch at 12–485 (SQWTDDQWKA…IDLAKNFRSR (474 aa)) folds into the UvrD-like helicase ATP-binding domain. 33–40 (AAAGSGKT) serves as a coordination point for ATP. In terms of domain architecture, UvrD-like helicase C-terminal spans 505 to 805 (GEIDYDADAE…RIMTIHKSKG (301 aa)).

Belongs to the helicase family. AddA subfamily. In terms of assembly, heterodimer of AddA and AddB/RexB. Mg(2+) is required as a cofactor.

The enzyme catalyses Couples ATP hydrolysis with the unwinding of duplex DNA by translocating in the 3'-5' direction.. The catalysed reaction is ATP + H2O = ADP + phosphate + H(+). Functionally, the heterodimer acts as both an ATP-dependent DNA helicase and an ATP-dependent, dual-direction single-stranded exonuclease. Recognizes the chi site generating a DNA molecule suitable for the initiation of homologous recombination. The AddA nuclease domain is required for chi fragment generation; this subunit has the helicase and 3' -&gt; 5' nuclease activities. The sequence is that of ATP-dependent helicase/nuclease subunit A from Bacillus thuringiensis subsp. konkukian (strain 97-27).